A 203-amino-acid polypeptide reads, in one-letter code: Endo-type membrane-bound lytic murein transglycosylase A (203 aa).

The signal sequence occupies residues methionine 1 to glycine 15. A lipid anchor (N-palmitoyl cysteine) is attached at cysteine 16. The S-diacylglycerol cysteine moiety is linked to residue cysteine 16.

Belongs to the transglycosylase Slt family.

It is found in the cell outer membrane. It carries out the reaction Endolytic cleavage of the (1-&gt;4)-beta-glycosidic linkage between N-acetylmuramic acid (MurNAc) and N-acetylglucosamine (GlcNAc) residues in peptidoglycan with concomitant formation of a 1,6-anhydrobond in the MurNAc residue.. Functionally, murein-degrading enzyme. May play a role in recycling of muropeptides during cell elongation and/or cell division. Preferentially cleaves at a distance of more than two disaccharide units from the ends of the glycan chain. The polypeptide is Endo-type membrane-bound lytic murein transglycosylase A (Klebsiella pneumoniae (strain 342)).